A 219-amino-acid polypeptide reads, in one-letter code: Proteasome subunit beta type-9 (219 aa).

The propeptide at 1–20 is removed in mature form; sequence MLRAGAPTAGSFRTEEVHTG. Thr21 acts as the Nucleophile in catalysis. An N6-acetyllysine mark is found at Lys53 and Lys109.

The protein belongs to the peptidase T1B family. The 26S proteasome consists of a 20S proteasome core and two 19S regulatory subunits. The 20S proteasome core is composed of 28 subunits that are arranged in four stacked rings, resulting in a barrel-shaped structure. The two end rings are each formed by seven alpha subunits, and the two central rings are each formed by seven beta subunits. The catalytic chamber with the active sites is on the inside of the barrel. Component of the immunoproteasome, where it displaces the equivalent housekeeping subunit PSMB6. Component of the spermatoproteasome, a form of the proteasome specifically found in testis. Autocleaved. The resulting N-terminal Thr residue of the mature subunit is responsible for the nucleophile proteolytic activity.

The protein localises to the cytoplasm. The protein resides in the nucleus. The enzyme catalyses Cleavage of peptide bonds with very broad specificity.. Its function is as follows. The proteasome is a multicatalytic proteinase complex which is characterized by its ability to cleave peptides with Arg, Phe, Tyr, Leu, and Glu adjacent to the leaving group at neutral or slightly basic pH. The proteasome has an ATP-dependent proteolytic activity. This subunit is involved in antigen processing to generate class I binding peptides. In Mus terricolor (Earth-colored mouse), this protein is Proteasome subunit beta type-9 (Psmb9).